The sequence spans 406 residues: MANVYDILLERGYIKQITHEDEVRELLGKEKVTFYIGFDPTADSLHIGHFLQMMVMSHMQKAGHKPIALLGGGTAMIGDPTGKTDMRKMLSREQIQHNADCFKKQFSKFIDFEDEKAIMANNADWLMNLNYVNFLREIGVHFSVNKMLTAECFKQRMEKGLTFLEFNYMLMQGYDFLELNRRYGCTFQMGGDDQWANIIAGVNLIRKKERKPAFGMTFTLLTKSDGKKMGKTEGGAIWLDKEKTSPYDFYQYWRNVDDADVEKCLLLLTFLPMDEVKRLSSLPGEKINEAKKVLAYEVTKIIHGEKEAQMAKEAAEALFSGGESLNNVPTIELDESSLGCSVVELLVDIHILPSKSEARRLIKQNGLTINGEKVTDSELKVTKDHFKNGELLIRRGKKNYNRIIIK.

Tyrosine 35 lines the L-tyrosine pocket. The short motif at 40 to 49 (PTADSLHIGH) is the 'HIGH' region element. Positions 168 and 172 each coordinate L-tyrosine. The 'KMSKS' region motif lies at 228–232 (KMGKT). Residue lysine 231 coordinates ATP. The S4 RNA-binding domain maps to 340-406 (CSVVELLVDI…KKNYNRIIIK (67 aa)).

Belongs to the class-I aminoacyl-tRNA synthetase family. TyrS type 1 subfamily. Homodimer.

The protein resides in the cytoplasm. It catalyses the reaction tRNA(Tyr) + L-tyrosine + ATP = L-tyrosyl-tRNA(Tyr) + AMP + diphosphate + H(+). Its function is as follows. Catalyzes the attachment of tyrosine to tRNA(Tyr) in a two-step reaction: tyrosine is first activated by ATP to form Tyr-AMP and then transferred to the acceptor end of tRNA(Tyr). This is Tyrosine--tRNA ligase from Clostridium kluyveri (strain NBRC 12016).